A 508-amino-acid polypeptide reads, in one-letter code: Maturase K (508 aa).

It belongs to the intron maturase 2 family. MatK subfamily.

It localises to the plastid. Its subcellular location is the chloroplast. In terms of biological role, usually encoded in the trnK tRNA gene intron. Probably assists in splicing its own and other chloroplast group II introns. The sequence is that of Maturase K from Ranunculus trichophyllus (Whitewater crowfoot).